Here is a 324-residue protein sequence, read N- to C-terminus: MARIIITLTIPLFYFFFFSLLSHQTMSQPDHIFTVCNPTNNFTQTSSYETNRDTLLASLRESSSLGHYSNATEGLSPDTVHGMFLCRGDITTASCVDCVQTATTEIASNCTLNKRAVIYYDECMVRYSNVSFSSELEIVPSITIYSLRSAPNPTRFNQTLTEKFSELIFNVSSSSLVPYFVEDQERVTQSEGSYDLDTMVQCSPDLDIFNCTVCLRVAFFRISTCCGLPSYAKIFTPKCLLRFQTSVLLSPPPSPSAPPPRSPPPKSSPPSSLPQTPSPPLVFTPPQNVPNPSGSFSFNVLKGNVIFGRIVVTMTALVFALVDL.

A signal peptide spans 1-27 (MARIIITLTIPLFYFFFFSLLSHQTMS). Gnk2-homologous domains follow at residues 29 to 132 (PDHI…NVSF) and 138 to 248 (IVPS…TSVL). Positions 251 to 286 (PPPSPSAPPPRSPPPKSSPPSSLPQTPSPPLVFTPP) are disordered.

The protein belongs to the cysteine-rich repeat secretory protein family.

It localises to the secreted. The chain is Cysteine-rich repeat secretory protein 9 (CRRSP9) from Arabidopsis thaliana (Mouse-ear cress).